Consider the following 355-residue polypeptide: Phosphoribosylformylglycinamidine cyclo-ligase (355 aa).

Belongs to the AIR synthase family.

It is found in the cytoplasm. The enzyme catalyses 2-formamido-N(1)-(5-O-phospho-beta-D-ribosyl)acetamidine + ATP = 5-amino-1-(5-phospho-beta-D-ribosyl)imidazole + ADP + phosphate + H(+). It functions in the pathway purine metabolism; IMP biosynthesis via de novo pathway; 5-amino-1-(5-phospho-D-ribosyl)imidazole from N(2)-formyl-N(1)-(5-phospho-D-ribosyl)glycinamide: step 2/2. This chain is Phosphoribosylformylglycinamidine cyclo-ligase, found in Methylobacterium nodulans (strain LMG 21967 / CNCM I-2342 / ORS 2060).